The primary structure comprises 260 residues: Dolichol-phosphate mannosyltransferase subunit 1 (260 aa).

Position 2 is an N-acetylalanine (A2). Residues S3 and S9 each carry the phosphoserine modification. Residues P32, Y34, E36, I63, D65, D118, A119, D120, R147, R234, and K240 each coordinate GDP-alpha-D-mannose. Residue D120 coordinates Mg(2+). D120 serves as a coordination point for Mn(2+).

It belongs to the glycosyltransferase 2 family. In terms of assembly, component of the dolichol-phosphate mannose (DPM) synthase complex composed of DPM1, DPM2 and DPM3; within the complex, directly interacts with DPM3. This interaction stabilizes DPM1. The cofactor is Mg(2+). Mn(2+) serves as cofactor. It depends on Ca(2+) as a cofactor.

Its subcellular location is the endoplasmic reticulum. It carries out the reaction a di-trans,poly-cis-dolichyl phosphate + GDP-alpha-D-mannose = a di-trans,poly-cis-dolichyl beta-D-mannosyl phosphate + GDP. It participates in protein modification; protein glycosylation. Its function is as follows. Transfers mannose from GDP-mannose to dolichol monophosphate to form dolichol phosphate mannose (Dol-P-Man) which is the mannosyl donor in pathways leading to N-glycosylation, glycosyl phosphatidylinositol membrane anchoring, and O-mannosylation of proteins; catalytic subunit of the dolichol-phosphate mannose (DPM) synthase complex. The sequence is that of Dolichol-phosphate mannosyltransferase subunit 1 (DPM1) from Homo sapiens (Human).